The following is a 326-amino-acid chain: CRISPR-associated endonuclease Cas1 (326 aa).

Residues E191, H255, and D269 each contribute to the Mn(2+) site.

This sequence belongs to the CRISPR-associated endonuclease Cas1 family. In terms of assembly, homodimer. Interacts with Cas3, in the absence of crRNA. Mg(2+) is required as a cofactor. The cofactor is Mn(2+).

In terms of biological role, CRISPR (clustered regularly interspaced short palindromic repeat), is an adaptive immune system that provides protection against mobile genetic elements (viruses, transposable elements and conjugative plasmids). CRISPR clusters contain sequences complementary to antecedent mobile elements and target invading nucleic acids. CRISPR clusters are transcribed and processed into CRISPR RNA (crRNA). Acts as a dsDNA endonuclease. Involved in the integration of spacer DNA into the CRISPR cassette. The chain is CRISPR-associated endonuclease Cas1 from Pectobacterium atrosepticum (strain SCRI 1043 / ATCC BAA-672) (Erwinia carotovora subsp. atroseptica).